A 478-amino-acid chain; its full sequence is Serine/threonine-protein phosphatase T (478 aa).

3 TPR repeats span residues 9–42, 43–76, and 78–110; these read ATAL…YDRE, PSFF…DPAY, and KAYW…EPNN. A catalytic region spans residues 151–463; the sequence is AVDDSYDGVR…QVFEAVPHPD (313 aa). Residues aspartate 221, histidine 223, aspartate 250, and asparagine 282 each contribute to the Mn(2+) site. Histidine 283 (proton donor/acceptor) is an active-site residue. Mn(2+) contacts are provided by histidine 331 and histidine 408.

It belongs to the PPP phosphatase family. PP-5 (PP-T) subfamily. Requires Mg(2+) as cofactor. It depends on Mn(2+) as a cofactor.

Its subcellular location is the nucleus. It catalyses the reaction O-phospho-L-seryl-[protein] + H2O = L-seryl-[protein] + phosphate. It carries out the reaction O-phospho-L-threonyl-[protein] + H2O = L-threonyl-[protein] + phosphate. In terms of biological role, protein phosphatase that specifically binds to and dephosphorylates the molecular chaperone Hsp90. Dephosphorylation positively regulates the Hsp90 chaperone machinery. The sequence is that of Serine/threonine-protein phosphatase T from Aspergillus oryzae (strain ATCC 42149 / RIB 40) (Yellow koji mold).